The chain runs to 26 residues: Coenzyme PQQ synthesis protein A (26 aa).

The segment at residues 16-20 (EINSY) is a cross-link (pyrroloquinoline quinone (Glu-Tyr)).

This sequence belongs to the PqqA family.

It functions in the pathway cofactor biosynthesis; pyrroloquinoline quinone biosynthesis. In terms of biological role, required for coenzyme pyrroloquinoline quinone (PQQ) biosynthesis. PQQ is probably formed by cross-linking a specific glutamate to a specific tyrosine residue and excising these residues from the peptide. The polypeptide is Coenzyme PQQ synthesis protein A (Gluconacetobacter diazotrophicus (strain ATCC 49037 / DSM 5601 / CCUG 37298 / CIP 103539 / LMG 7603 / PAl5)).